Here is a 346-residue protein sequence, read N- to C-terminus: Ribosomal RNA small subunit methyltransferase H (346 aa).

S-adenosyl-L-methionine is bound by residues 53–55, Asp-70, Phe-97, Asp-114, and Gln-121; that span reads GGY.

Belongs to the methyltransferase superfamily. RsmH family.

It is found in the cytoplasm. It catalyses the reaction cytidine(1402) in 16S rRNA + S-adenosyl-L-methionine = N(4)-methylcytidine(1402) in 16S rRNA + S-adenosyl-L-homocysteine + H(+). Functionally, specifically methylates the N4 position of cytidine in position 1402 (C1402) of 16S rRNA. The sequence is that of Ribosomal RNA small subunit methyltransferase H from Bartonella henselae (strain ATCC 49882 / DSM 28221 / CCUG 30454 / Houston 1) (Rochalimaea henselae).